Consider the following 80-residue polypeptide: Clavaspirin (80 aa).

A signal peptide spans 1–17; the sequence is MKTIILILLILGLGIDA. The propeptide occupies 18–29; that stretch reads KSLEESKADEEK. L52 bears the Leucine amide mark. The propeptide occupies 53 to 80; that stretch reads GDDQQDNGKFYGYYAEDNGKHWYDTGDQ.

As to expression, pharyngeal tissues and hemocytes.

It localises to the secreted. Exhibits broad-spectrum antimicrobial activity against both Gram-positive and Gram-negative bacteria. Has potent hemolytic activity. This is Clavaspirin from Styela clava (Sea squirt).